A 235-amino-acid chain; its full sequence is Large ribosomal subunit protein uL1 (235 aa).

Belongs to the universal ribosomal protein uL1 family. In terms of assembly, part of the 50S ribosomal subunit.

Its function is as follows. Binds directly to 23S rRNA. The L1 stalk is quite mobile in the ribosome, and is involved in E site tRNA release. Protein L1 is also a translational repressor protein, it controls the translation of the L11 operon by binding to its mRNA. This Arthrobacter sp. (strain FB24) protein is Large ribosomal subunit protein uL1.